The sequence spans 303 residues: Ribosomal RNA small subunit methyltransferase H (303 aa).

Residues Gly-32–His-34, Asp-52, Phe-78, Asp-99, and Gln-106 each bind S-adenosyl-L-methionine.

This sequence belongs to the methyltransferase superfamily. RsmH family.

Its subcellular location is the cytoplasm. The enzyme catalyses cytidine(1402) in 16S rRNA + S-adenosyl-L-methionine = N(4)-methylcytidine(1402) in 16S rRNA + S-adenosyl-L-homocysteine + H(+). Its function is as follows. Specifically methylates the N4 position of cytidine in position 1402 (C1402) of 16S rRNA. The protein is Ribosomal RNA small subunit methyltransferase H of Acinetobacter baylyi (strain ATCC 33305 / BD413 / ADP1).